Reading from the N-terminus, the 84-residue chain is MAHKKGGGSTKNGRDSNPKYLGVKAAGGSTVSAGTIILRQRGTVIKPGTNAGIGRDHTIFSLVDGVVTFRNGRNNKKQVDILPS.

The interval 1 to 21 is disordered; that stretch reads MAHKKGGGSTKNGRDSNPKYL.

Belongs to the bacterial ribosomal protein bL27 family.

This Chlorobium luteolum (strain DSM 273 / BCRC 81028 / 2530) (Pelodictyon luteolum) protein is Large ribosomal subunit protein bL27.